The following is a 1086-amino-acid chain: NAD(P) transhydrogenase, mitochondrial (1086 aa).

The N-terminal 43 residues, 1–43 (MANLLKTVVTGCSCPFLSNLGSCKVLPGKKNFLRAFHTHRILW), are a transit peptide targeting the mitochondrion. The Mitochondrial matrix segment spans residues 44–474 (CKAPVKPGIP…TITPFRKTMT (431 aa)). Residue Lys-70 is modified to N6-acetyllysine. An N6-succinyllysine modification is found at Lys-117. 182-184 (RVT) contributes to the NAD(+) binding site. N6-succinyllysine is present on Lys-224. NAD(+) contacts are provided by residues Val-237, 257–259 (DTR), and Gly-287. Lys-294 bears the N6-succinyllysine mark. Positions 300 and 319 each coordinate NAD(+). Lys-331 carries the post-translational modification N6-succinyllysine. Lys-397 is subject to N6-acetyllysine. The next 4 helical transmembrane spans lie at 475–493 (SASVYTAGLTGILGLGIAA), 501–521 (MVTTFGLAGIVGYHTVWGVTP), 527–546 (LMSVTNAISGLTAVGGLVLM), and 558–578 (GLAALATFISSVNIAGGFLVT). The Mitochondrial matrix portion of the chain corresponds to 579-595 (QRMLDMFKRPTDPPEYN). Transmembrane regions (helical) follow at residues 596-616 (YLYLLPAGTFVGGYLASLYSG), 622-642 (IMYLGSGLCCVGALAGLSTQG), 646-666 (LGNALGMIGVAGGLAATLGGL), 672-691 (LLAQMSGAMALGGTIGLTIA), and 702-722 (LVAAFHSLVGLAAVLTCIAEY). The Cytoplasmic segment spans residues 723–739 (IIEYPHFATDAAANLTK). The next 5 membrane-spanning stretches (helical) occupy residues 740 to 760 (IVAYLGTYIGGVTFSGSLVAY), 778 to 797 (HLLNAGLLAASVGGIIPFMM), 801 to 819 (FTTGITCLGSVSALSAVMG), 833 to 853 (VVITVLNSYSGWALCAEGFLL), and 857 to 879 (LLTIVGALIGSSGAILSYIMCVA). At 880-1086 (MNRSLANVIL…QAKVRESYQK (207 aa)) the chain is on the mitochondrial matrix side. Residues Tyr-933, 965–970 (VAGRMP), 1007–1011 (GANDT), 1026–1027 (GM), 1042–1049 (KRSLGVGY), and 1068–1069 (DA) each bind NADP(+). An N6-succinyllysine modification is found at Lys-1079.

In the N-terminal section; belongs to the AlaDH/PNT family. The protein in the C-terminal section; belongs to the PNT beta subunit family. As to quaternary structure, homodimer.

It localises to the mitochondrion inner membrane. It catalyses the reaction NAD(+) + NADPH + H(+)(in) = NADH + NADP(+) + H(+)(out). The transhydrogenation between NADH and NADP is coupled to respiration and ATP hydrolysis and functions as a proton pump across the membrane. May play a role in reactive oxygen species (ROS) detoxification in the adrenal gland. The chain is NAD(P) transhydrogenase, mitochondrial (NNT) from Ovis aries (Sheep).